The primary structure comprises 214 residues: Endoplasmic reticulum vesicle protein 25 (214 aa).

A signal peptide spans 1-20; sequence MRSISTLLFIISTFISLVSA. Over 21-183 the chain is Lumenal; sequence LQLAIPATTN…TNESTNSRVK (163 aa). Residues 33–124 form the GOLD domain; that stretch reads PFCIRDFVQE…VREIELDVES (92 aa). A helical membrane pass occupies residues 184-204; sequence WFSILVITSLVGLGAWQVQYL. The Cytoplasmic portion of the chain corresponds to 205–214; sequence RHYFKVKHII.

Belongs to the EMP24/GP25L family.

The protein localises to the endoplasmic reticulum membrane. The protein resides in the golgi apparatus membrane. Functionally, constituent of COPII-coated endoplasmic reticulum-derived transport vesicles. Required for efficient transport of a subset of secretory proteins to the Golgi. Facilitates retrograde transport from the Golgi to the endoplasmic reticulum. In Debaryomyces hansenii (strain ATCC 36239 / CBS 767 / BCRC 21394 / JCM 1990 / NBRC 0083 / IGC 2968) (Yeast), this protein is Endoplasmic reticulum vesicle protein 25 (ERV25).